The sequence spans 156 residues: MTTVVSRTFRSSPHRDALQTWDAIVELLTQGKDGTARSELRAVTGVAASLIADQAPKSAPIVATCDGPRTRIYCLFDEDAIDGDDANEEVLGFEPLKGDWGVSLPCPKEQLGWVQSALKKHSSRIIARDLSQGIATQAQADAGQALSLDLGGFLKS.

This sequence belongs to the bacterial HORMA family. HORMA3 subfamily. In terms of assembly, interacts with Cap7 (also called HORMA2) and CdnC; forms CdnD:Cap7:Cap8 (also called CdnD:HORMA2:HORMA3) complexes with stoichiometries of 1:1:1 and 2:1:1.

In terms of biological role, CBASS (cyclic oligonucleotide-based antiphage signaling system) provides immunity against bacteriophage. The CD-NTase protein synthesizes cyclic nucleotides in response to infection; these serve as specific second messenger signals. The signals activate a diverse range of effectors, leading to bacterial cell death and thus abortive phage infection. A type III-C(AAA) CBASS system. Its function is as follows. A member of the CBASS system in this bacteria. It does not seem to bind a closure peptide, its exact function is unknown. This is CD-NTase-associated protein 8 from Pseudomonas aeruginosa.